We begin with the raw amino-acid sequence, 466 residues long: Asparagine--tRNA ligase (466 aa).

Belongs to the class-II aminoacyl-tRNA synthetase family. As to quaternary structure, homodimer.

The protein resides in the cytoplasm. It catalyses the reaction tRNA(Asn) + L-asparagine + ATP = L-asparaginyl-tRNA(Asn) + AMP + diphosphate + H(+). This Vibrio cholerae serotype O1 (strain ATCC 39315 / El Tor Inaba N16961) protein is Asparagine--tRNA ligase.